A 183-amino-acid chain; its full sequence is Hypoxanthine/guanine phosphoribosyltransferase (183 aa).

This sequence belongs to the purine/pyrimidine phosphoribosyltransferase family. Archaeal HPRT subfamily. Homodimer.

It localises to the cytoplasm. It catalyses the reaction IMP + diphosphate = hypoxanthine + 5-phospho-alpha-D-ribose 1-diphosphate. It carries out the reaction GMP + diphosphate = guanine + 5-phospho-alpha-D-ribose 1-diphosphate. It functions in the pathway purine metabolism; IMP biosynthesis via salvage pathway; IMP from hypoxanthine: step 1/1. Its function is as follows. Catalyzes a salvage reaction resulting in the formation of IMP that is energically less costly than de novo synthesis. The polypeptide is Hypoxanthine/guanine phosphoribosyltransferase (Methanotorris igneus (strain DSM 5666 / JCM 11834 / Kol 5)).